The sequence spans 232 residues: Ribosomal RNA small subunit methyltransferase G (232 aa).

Residues Gly-93, Leu-98, 144–145, and Arg-163 contribute to the S-adenosyl-L-methionine site; that span reads VE.

The protein belongs to the methyltransferase superfamily. RNA methyltransferase RsmG family.

The protein resides in the cytoplasm. It catalyses the reaction guanosine(527) in 16S rRNA + S-adenosyl-L-methionine = N(7)-methylguanosine(527) in 16S rRNA + S-adenosyl-L-homocysteine. Specifically methylates the N7 position of guanine in position 527 of 16S rRNA. The protein is Ribosomal RNA small subunit methyltransferase G of Burkholderia pseudomallei (strain 668).